The chain runs to 102 residues: Small ribosomal subunit protein uS10 (102 aa).

Belongs to the universal ribosomal protein uS10 family. As to quaternary structure, part of the 30S ribosomal subunit.

Its function is as follows. Involved in the binding of tRNA to the ribosomes. This Cereibacter sphaeroides (strain ATCC 17029 / ATH 2.4.9) (Rhodobacter sphaeroides) protein is Small ribosomal subunit protein uS10.